Consider the following 247-residue polypeptide: Triosephosphate isomerase (247 aa).

Substrate is bound at residue 8–10; sequence NWK. Histidine 95 serves as the catalytic Electrophile. Glutamate 162 serves as the catalytic Proton acceptor. Substrate-binding residues include glycine 168 and serine 207.

Belongs to the triosephosphate isomerase family. Homodimer.

It is found in the cytoplasm. The enzyme catalyses D-glyceraldehyde 3-phosphate = dihydroxyacetone phosphate. Its pathway is carbohydrate biosynthesis; gluconeogenesis. It functions in the pathway carbohydrate degradation; glycolysis; D-glyceraldehyde 3-phosphate from glycerone phosphate: step 1/1. In terms of biological role, involved in the gluconeogenesis. Catalyzes stereospecifically the conversion of dihydroxyacetone phosphate (DHAP) to D-glyceraldehyde-3-phosphate (G3P). In Gluconacetobacter diazotrophicus (strain ATCC 49037 / DSM 5601 / CCUG 37298 / CIP 103539 / LMG 7603 / PAl5), this protein is Triosephosphate isomerase.